We begin with the raw amino-acid sequence, 75 residues long: Peptide Ctri9610 (75 aa).

Positions 1–22 are cleaved as a signal peptide; the sequence is MNSKYLFVFLILNVIFIDLCQG. A Lysine amide modification is found at Lys41. Residues 42–75 constitute a propeptide that is removed on maturation; that stretch reads GTRRRELGSQYDYLQDFRKRELDLDDLLSKFPDY.

Belongs to the non-disulfide-bridged peptide (NDBP) superfamily. Short antimicrobial peptide (group 4) family. As to expression, expressed by the venom gland.

It localises to the secreted. The sequence is that of Peptide Ctri9610 from Chaerilus tricostatus (Scorpion).